The chain runs to 287 residues: Ribosomal RNA small subunit methyltransferase I (287 aa).

It belongs to the methyltransferase superfamily. RsmI family.

It is found in the cytoplasm. It catalyses the reaction cytidine(1402) in 16S rRNA + S-adenosyl-L-methionine = 2'-O-methylcytidine(1402) in 16S rRNA + S-adenosyl-L-homocysteine + H(+). Functionally, catalyzes the 2'-O-methylation of the ribose of cytidine 1402 (C1402) in 16S rRNA. In Streptococcus pyogenes serotype M18 (strain MGAS8232), this protein is Ribosomal RNA small subunit methyltransferase I.